We begin with the raw amino-acid sequence, 976 residues long: Leucine--tRNA ligase (976 aa).

Positions 63-74 match the 'HIGH' region motif; that stretch reads PYPSGVGLHVGH. A 'KMSKS' region motif is present at residues 745–749; it reads KMGKS. Lys-748 provides a ligand contact to ATP.

This sequence belongs to the class-I aminoacyl-tRNA synthetase family.

The protein resides in the cytoplasm. The catalysed reaction is tRNA(Leu) + L-leucine + ATP = L-leucyl-tRNA(Leu) + AMP + diphosphate. This chain is Leucine--tRNA ligase, found in Corynebacterium jeikeium (strain K411).